A 283-amino-acid chain; its full sequence is NAD kinase (283 aa).

Catalysis depends on D66, which acts as the Proton acceptor. Residues 66–67, 140–141, R151, R168, D170, and Q240 each bind NAD(+); these read DG and ND.

The protein belongs to the NAD kinase family. A divalent metal cation is required as a cofactor.

It is found in the cytoplasm. It catalyses the reaction NAD(+) + ATP = ADP + NADP(+) + H(+). Its function is as follows. Involved in the regulation of the intracellular balance of NAD and NADP, and is a key enzyme in the biosynthesis of NADP. Catalyzes specifically the phosphorylation on 2'-hydroxyl of the adenosine moiety of NAD to yield NADP. This is NAD kinase from Syntrophobacter fumaroxidans (strain DSM 10017 / MPOB).